The primary structure comprises 299 residues: Lathosterol oxidase (299 aa).

3 helical membrane-spanning segments follow: residues 32–52, 79–99, and 117–137; these read VSLL…CATL, FTVK…LLEL, and IHLI…IYWI. The region spanning 124 to 252 is the Fatty acid hydroxylase domain; that stretch reads ISFLFFTDML…YFTLWDRIGG (129 aa). The short motif at 138-143 is the Histidine box-1 element; that stretch reads HRGLHH. The Histidine box-2 motif lies at 151-155; that stretch reads HKPHH. The Histidine box-3 motif lies at 228-233; it reads HHTDHH. Phosphoserine is present on Ser-253.

The protein belongs to the sterol desaturase family. Requires Fe cation as cofactor.

The protein localises to the endoplasmic reticulum membrane. The catalysed reaction is a Delta(7)-sterol + 2 Fe(II)-[cytochrome b5] + O2 + 2 H(+) = a Delta(5),Delta(7)-sterol + 2 Fe(III)-[cytochrome b5] + 2 H2O. The enzyme catalyses lathosterol + 2 Fe(II)-[cytochrome b5] + O2 + 2 H(+) = 7-dehydrocholesterol + 2 Fe(III)-[cytochrome b5] + 2 H2O. It catalyses the reaction 5alpha-cholesta-7,24-dien-3beta-ol + 2 Fe(II)-[cytochrome b5] + O2 + 2 H(+) = 7-dehydrodesmosterol + 2 Fe(III)-[cytochrome b5] + 2 H2O. Its pathway is steroid biosynthesis; cholesterol biosynthesis. In terms of biological role, catalyzes the penultimate step of the biosynthesis of cholesterol, the dehydrogenation of lathosterol into 7-dehydrocholesterol (7-DHC). Cholesterol is the major sterol component in mammalian membranes and a precursor for bile acid and steroid hormone synthesis. In addition to its essential role in cholesterol biosynthesis, it also indirectly regulates ferroptosis through the production of 7-DHC. By diverting the spread of damage caused by peroxyl radicals from the phospholipid components to its sterol nucleus, 7-DHC prevents this form of cell death. This Rattus norvegicus (Rat) protein is Lathosterol oxidase.